We begin with the raw amino-acid sequence, 342 residues long: Cytosolic Fe-S cluster assembly factor NBP35 (342 aa).

Positions 1–45 (MGPSLETPEPVEDVLANPLKQKPQLVAPEPEHCPGPESEQAGTAD) are disordered. The [4Fe-4S] cluster site is built by C33, C47, C50, and C56. 86–93 (GKGGVGKS) contributes to the ATP binding site. Residues C259 and C262 each contribute to the [4Fe-4S] cluster site.

It belongs to the Mrp/NBP35 ATP-binding proteins family. NUBP1/NBP35 subfamily. In terms of assembly, heterotetramer of 2 NBP35 and 2 CFD1 chains. It depends on [4Fe-4S] cluster as a cofactor.

The protein resides in the cytoplasm. In terms of biological role, component of the cytosolic iron-sulfur (Fe/S) protein assembly (CIA) machinery. Required for maturation of extramitochondrial Fe-S proteins. The NBP35-CFD1 heterotetramer forms a Fe-S scaffold complex, mediating the de novo assembly of an Fe-S cluster and its transfer to target apoproteins. The protein is Cytosolic Fe-S cluster assembly factor NBP35 of Chaetomium globosum (strain ATCC 6205 / CBS 148.51 / DSM 1962 / NBRC 6347 / NRRL 1970) (Soil fungus).